The following is a 259-amino-acid chain: uncharacterized protein (259 aa).

Residue glutamate 46 is part of the active site.

Belongs to the PhzF family.

This is an uncharacterized protein from Pseudomonas aeruginosa (strain ATCC 15692 / DSM 22644 / CIP 104116 / JCM 14847 / LMG 12228 / 1C / PRS 101 / PAO1).